We begin with the raw amino-acid sequence, 342 residues long: Metalloendoproteinase 4-MMP (342 aa).

A signal peptide spans 1–34 (MHHHHHPCNRKPFTTIFSFFLLYLNLHNQQIIEA). Residues 35 to 124 (RNPSQFTTNP…KTAPFHTGKK (90 aa)) constitute a propeptide, activation peptide. The Cysteine switch signature appears at 104-111 (PRCGFPDD). Residues Cys-106 and His-252 each contribute to the Zn(2+) site. The active site involves Glu-253. Residues His-256 and His-262 each coordinate Zn(2+). Asn-300 carries an N-linked (GlcNAc...) asparagine glycan. Residue Asp-317 is the site of GPI-anchor amidated aspartate attachment. The propeptide at 318–342 (GSRIRSQGMIYSTLSTVIALCFLNW) is removed in mature form.

The protein belongs to the peptidase M10A family. Matrix metalloproteinases (MMPs) subfamily. Requires Zn(2+) as cofactor. Mostly expressed in flowers and stems, and, to a lower extent, in leaves and roots.

It localises to the cell membrane. With respect to regulation, repressed by acetohydroxamic acid (AHA). Functionally, matrix metalloproteinases (MMPs) or matrixins may play a role in the degradation and remodeling of the extracellular matrix (ECM) during development or in response to stresses. Active on myelin basic protein (MBP) and, to some extent, on McaPLGLDpaAR-NH(2) (QF24) and beta-casein. The protein is Metalloendoproteinase 4-MMP of Arabidopsis thaliana (Mouse-ear cress).